Here is a 356-residue protein sequence, read N- to C-terminus: uncharacterized protein (356 aa).

6 helical membrane-spanning segments follow: residues 2 to 22 (FEAF…FHRL), 35 to 55 (AYVT…PIPY), 74 to 94 (FTNM…EIVV), 99 to 119 (IMYG…GPFL), 124 to 144 (VLSL…VALV), and 154 to 174 (IILI…FVDI). The GGDEF domain occupies 218 to 353 (QSIALLLIDI…GRNKVMFNPI (136 aa)).

The protein resides in the cell membrane. This is an uncharacterized protein from Staphylococcus aureus (strain bovine RF122 / ET3-1).